The sequence spans 629 residues: Smc-like protein Sph1 (629 aa).

2 coiled-coil regions span residues L139–D282 and A318–D487.

It belongs to the Sph1/Sph2 family.

Its subcellular location is the cytoplasm. May play a role in a late step of replication. In Halobacterium salinarum (strain ATCC 29341 / DSM 671 / R1), this protein is Smc-like protein Sph1 (sph1).